A 371-amino-acid chain; its full sequence is N-acetyldiaminopimelate deacetylase (371 aa).

Asp68 is a catalytic residue. Residue Glu127 is the Proton acceptor of the active site.

This sequence belongs to the peptidase M20A family. N-acetyldiaminopimelate deacetylase subfamily.

It carries out the reaction N-acetyl-(2S,6S)-2,6-diaminopimelate + H2O = (2S,6S)-2,6-diaminopimelate + acetate. It participates in amino-acid biosynthesis; L-lysine biosynthesis via DAP pathway; LL-2,6-diaminopimelate from (S)-tetrahydrodipicolinate (acetylase route): step 3/3. Catalyzes the conversion of N-acetyl-diaminopimelate to diaminopimelate and acetate. The chain is N-acetyldiaminopimelate deacetylase from Listeria monocytogenes serotype 4b (strain CLIP80459).